We begin with the raw amino-acid sequence, 136 residues long: Translation initiation factor 5A (136 aa).

Residue Lys37 is modified to Hypusine.

Belongs to the eIF-5A family.

Its subcellular location is the cytoplasm. Functionally, functions by promoting the formation of the first peptide bond. The protein is Translation initiation factor 5A (eIF5A) of Thermococcus gammatolerans (strain DSM 15229 / JCM 11827 / EJ3).